Here is a 164-residue protein sequence, read N- to C-terminus: UPF0114 protein YqhA (164 aa).

3 consecutive transmembrane segments (helical) span residues 15–35 (LLAP…LKFF), 53–73 (LILV…LVMV), and 136–156 (LMWY…MGYL).

This sequence belongs to the UPF0114 family.

It is found in the cell membrane. This is UPF0114 protein YqhA from Shigella dysenteriae serotype 1 (strain Sd197).